The chain runs to 123 residues: Probable histone H2B 3 (123 aa).

A disordered region spans residues Met-1–Arg-31. A glycan (O-linked (GlcNAc) serine) is linked at Ser-110. Residue Lys-118 forms a Glycyl lysine isopeptide (Lys-Gly) (interchain with G-Cter in ubiquitin) linkage.

It belongs to the histone H2B family. The nucleosome is a histone octamer containing two molecules each of H2A, H2B, H3 and H4 assembled in one H3-H4 heterotetramer and two H2A-H2B heterodimers. The octamer wraps approximately 147 bp of DNA. Post-translationally, monoubiquitination of Lys-118 gives a specific tag for epigenetic transcriptional activation and is also prerequisite for histone H3 'Lys-4' and 'Lys-79' methylation. In terms of processing, glcNAcylation at Ser-110 promotes monoubiquitination of Lys-118. It fluctuates in response to extracellular glucose, and associates with transcribed genes.

It is found in the nucleus. The protein localises to the chromosome. Its function is as follows. Core component of nucleosome. Nucleosomes wrap and compact DNA into chromatin, limiting DNA accessibility to the cellular machineries which require DNA as a template. Histones thereby play a central role in transcription regulation, DNA repair, DNA replication and chromosomal stability. DNA accessibility is regulated via a complex set of post-translational modifications of histones, also called histone code, and nucleosome remodeling. This chain is Probable histone H2B 3 (his-41), found in Caenorhabditis elegans.